A 72-amino-acid polypeptide reads, in one-letter code: UPF0150 protein ssl0738 (72 aa).

Belongs to the UPF0150 family.

The sequence is that of UPF0150 protein ssl0738 from Synechocystis sp. (strain ATCC 27184 / PCC 6803 / Kazusa).